We begin with the raw amino-acid sequence, 164 residues long: ATP synthase subunit b (164 aa).

Residues 10-30 (LLISQIVNFCLLAFLLNTFLY) form a helical membrane-spanning segment.

It belongs to the ATPase B chain family. As to quaternary structure, F-type ATPases have 2 components, F(1) - the catalytic core - and F(0) - the membrane proton channel. F(1) has five subunits: alpha(3), beta(3), gamma(1), delta(1), epsilon(1). F(0) has three main subunits: a(1), b(2) and c(10-14). The alpha and beta chains form an alternating ring which encloses part of the gamma chain. F(1) is attached to F(0) by a central stalk formed by the gamma and epsilon chains, while a peripheral stalk is formed by the delta and b chains.

It is found in the cell membrane. In terms of biological role, f(1)F(0) ATP synthase produces ATP from ADP in the presence of a proton or sodium gradient. F-type ATPases consist of two structural domains, F(1) containing the extramembraneous catalytic core and F(0) containing the membrane proton channel, linked together by a central stalk and a peripheral stalk. During catalysis, ATP synthesis in the catalytic domain of F(1) is coupled via a rotary mechanism of the central stalk subunits to proton translocation. Functionally, component of the F(0) channel, it forms part of the peripheral stalk, linking F(1) to F(0). The sequence is that of ATP synthase subunit b from Herpetosiphon aurantiacus (strain ATCC 23779 / DSM 785 / 114-95).